Reading from the N-terminus, the 303-residue chain is Acetaldehyde dehydrogenase (303 aa).

Residue cysteine 131 is the Acyl-thioester intermediate of the active site. Residues 162–170 (SVGPGTRAN) and asparagine 273 each bind NAD(+).

The protein belongs to the acetaldehyde dehydrogenase family.

It catalyses the reaction acetaldehyde + NAD(+) + CoA = acetyl-CoA + NADH + H(+). The chain is Acetaldehyde dehydrogenase from Marinomonas sp. (strain MWYL1).